Here is a 110-residue protein sequence, read N- to C-terminus: MLRILNMNEYISLNHYLILSSLVFTIGMFGLFMHRKNIINILMSIELMLLAVNINFVAFSIYMQELSGQIFSIIILTVAAAETSIGLAILLIYFRNKGSIEITDINQMWG.

Transmembrane regions (helical) follow at residues 13–33, 41–61, and 73–93; these read LNHYLILSSLVFTIGMFGLFM, ILMSIELMLLAVNINFVAFSI, and IIILTVAAAETSIGLAILLIY.

It belongs to the complex I subunit 4L family. As to quaternary structure, NDH-1 is composed of 14 different subunits. Subunits NuoA, H, J, K, L, M, N constitute the membrane sector of the complex.

The protein resides in the cell inner membrane. It carries out the reaction a quinone + NADH + 5 H(+)(in) = a quinol + NAD(+) + 4 H(+)(out). Functionally, NDH-1 shuttles electrons from NADH, via FMN and iron-sulfur (Fe-S) centers, to quinones in the respiratory chain. The immediate electron acceptor for the enzyme in this species is believed to be ubiquinone. Couples the redox reaction to proton translocation (for every two electrons transferred, four hydrogen ions are translocated across the cytoplasmic membrane), and thus conserves the redox energy in a proton gradient. In Rickettsia conorii (strain ATCC VR-613 / Malish 7), this protein is NADH-quinone oxidoreductase subunit K.